An 808-amino-acid polypeptide reads, in one-letter code: MTIEEVSGETPPSTPPSSSTPSPSSSTTNAAPLGSSVIPIVNKLQDIFAQLGSQSTIALPQVVVVGSQSSGKSSVLEALVGRDFLPRGNDICTRRPLVLQLLQTKSRANGGSDDEWGEFRHLPETRFYDFSEIRREIEAETNRLVGENKGVADTQIRLKISSPNVLNITLVDLPGITKVPVGDQPSDIEARIRTMILSYIKQDTCLILAVTPANTDLANSDALQIASIVDPDGHRTIGVITKLDIMDKGTDARKLLLGNVVPLRLGYVGVVNRCQEDILLNRTVKEALLAEEKFFRSHPVYHGLADRLGVPQLAKKLNQILVQHIKVLLPDLKSRISNALVATAKEHQSYGELTESRAGQGALLLNFLSKYCEAYSSLLEGKSEEMSTSELSGGARIHYIFQSIFVKSLEEVDPCEDLTDDDIRTAIQNATGPRSALFVPDVPFEVLVRRQISRLLDPSLQCARFIFEELIKISHRCMMNELQRFPVLRKRMDEVIGDFLREGLEPSEAMIGDIIDMEMDYINTSHPNFIGGTKAVEAAMHQVKSSRIPHPVARPKDTVEPDRTSSSTSQVKSRSFLGRQANGIVTDQGVVSADAEKAQPAANASDTRWGIPSIFRGGDTRAVTKDSLLNKPFSEAVEDMSHNLSMIYLKEPPAVLRPTETHSEQEAVEIQITKLLLRSYYDIVRKNIEDSVPKAIMHFLVNHTKRELHNVFIKKLYRENLFEEMLQEPDEIAVKRKRTQETLHVLQQAYRTLDELPLEADSVSAGMSKHQELLTSSKYSTSSSYSASPSTTRRSRRAGDQHQNGYGF.

Residues 1-31 (MTIEEVSGETPPSTPPSSSTPSPSSSTTNAA) are disordered. The span at 16–28 (PSSSTPSPSSSTT) shows a compositional bias: low complexity. The Dynamin-type G domain maps to 56–330 (TIALPQVVVV…LVQHIKVLLP (275 aa)). A G1 motif region spans residues 66 to 73 (GSQSSGKS). 66–73 (GSQSSGKS) contributes to the GTP binding site. Residues 92 to 94 (CTR) are G2 motif. Residues 172 to 175 (DLPG) are G3 motif. GTP is bound by residues 172–176 (DLPGI) and 241–244 (TKLD). The G4 motif stretch occupies residues 241–244 (TKLD). The tract at residues 271–274 (VNRC) is G5 motif. The disordered stretch occupies residues 548-578 (IPHPVARPKDTVEPDRTSSSTSQVKSRSFLG). The segment covering 554 to 563 (RPKDTVEPDR) has biased composition (basic and acidic residues). A compositionally biased stretch (low complexity) spans 564 to 575 (TSSSTSQVKSRS). Residues 670-761 (IQITKLLLRS…TLDELPLEAD (92 aa)) form the GED domain. Residues 774–808 (LTSSKYSTSSSYSASPSTTRRSRRAGDQHQNGYGF) form a disordered region. A compositionally biased stretch (low complexity) spans 775–792 (TSSKYSTSSSYSASPSTT).

This sequence belongs to the TRAFAC class dynamin-like GTPase superfamily. Dynamin/Fzo/YdjA family. As to quaternary structure, homooligomer. Interacts with ARC5 on peroxisomes and ELM1 on mitochondria. Ubiquitous. Preferentially expressed in flowers.

The protein localises to the mitochondrion. Its subcellular location is the peroxisome. Its function is as follows. Involved in the control of mitochondrial and peroxisomal division and morphology. In association with PEX11C, PEX11D, PEX11E and FIS1B, is involved in cell cycle-associated constitutive self-replication of preexisting peroxisomes. The sequence is that of Dynamin-related protein 3A (DRP3A) from Arabidopsis thaliana (Mouse-ear cress).